The primary structure comprises 314 residues: Homoserine kinase (314 aa).

96 to 106 (PIGSGLGSSAC) lines the ATP pocket.

It belongs to the GHMP kinase family. Homoserine kinase subfamily.

The protein resides in the cytoplasm. It catalyses the reaction L-homoserine + ATP = O-phospho-L-homoserine + ADP + H(+). The protein operates within amino-acid biosynthesis; L-threonine biosynthesis; L-threonine from L-aspartate: step 4/5. Its function is as follows. Catalyzes the ATP-dependent phosphorylation of L-homoserine to L-homoserine phosphate. The chain is Homoserine kinase from Haemophilus influenzae (strain 86-028NP).